The following is a 115-amino-acid chain: Prefoldin subunit beta (115 aa).

It belongs to the prefoldin subunit beta family. As to quaternary structure, heterohexamer of two alpha and four beta subunits.

It is found in the cytoplasm. Its function is as follows. Molecular chaperone capable of stabilizing a range of proteins. Seems to fulfill an ATP-independent, HSP70-like function in archaeal de novo protein folding. This Methanococcus aeolicus (strain ATCC BAA-1280 / DSM 17508 / OCM 812 / Nankai-3) protein is Prefoldin subunit beta.